We begin with the raw amino-acid sequence, 392 residues long: 8-amino-7-oxononanoate synthase (392 aa).

Arginine 26 contacts substrate. A pyridoxal 5'-phosphate-binding site is contributed by 112–113 (GF). Histidine 137 serves as a coordination point for substrate. Pyridoxal 5'-phosphate contacts are provided by serine 187, histidine 215, and threonine 241. At lysine 244 the chain carries N6-(pyridoxal phosphate)lysine. Threonine 357 is a binding site for substrate.

It belongs to the class-II pyridoxal-phosphate-dependent aminotransferase family. BioF subfamily. In terms of assembly, homodimer. It depends on pyridoxal 5'-phosphate as a cofactor.

The catalysed reaction is 6-carboxyhexanoyl-[ACP] + L-alanine + H(+) = (8S)-8-amino-7-oxononanoate + holo-[ACP] + CO2. The protein operates within cofactor biosynthesis; biotin biosynthesis. Functionally, catalyzes the decarboxylative condensation of pimeloyl-[acyl-carrier protein] and L-alanine to produce 8-amino-7-oxononanoate (AON), [acyl-carrier protein], and carbon dioxide. The sequence is that of 8-amino-7-oxononanoate synthase from Photobacterium profundum (strain SS9).